A 975-amino-acid chain; its full sequence is Homeobox protein cut-like 1 (975 aa).

The CUT 1 DNA-binding region spans 1–73 (SRQVKEQLIK…ILALRSIQGR (73 aa)). Disordered regions lie at residues 90-113 (PKRR…GSDE) and 126-148 (LQVQ…TSDD). A coiled-coil region spans residues 113 to 169 (EAIKSILEQAKRELQVQKTAEPAQPSSTSSSGTSDDAIRSILQQARREMEAQQAALD). The residue at position 207 (Ser-207) is a Phosphoserine. The tract at residues 209–246 (KKPPTAPDTSASTLPNPPALKKESQDAPGLDLPGAAES) is disordered. Residues Lys-229, Lys-255, and Lys-286 each participate in a glycyl lysine isopeptide (Lys-Gly) (interchain with G-Cter in SUMO2) cross-link. Basic and acidic residues predominate over residues 262-297 (GVWKDHWWSTVQPERKSAAPPEDAKSEEAGGTKEKG). The tract at residues 262-369 (GVWKDHWWST…SKPAKPSVPP (108 aa)) is disordered. The segment covering 328–351 (RTPQSSELSLTGASRSETPQNSPL) has biased composition (polar residues). Ser-349 carries the post-translational modification Phosphoserine. A DNA-binding region (CUT 2) is located at residues 374–461 (QYEIYMYQEV…QGVLPVQGQQ (88 aa)). The segment covering 476–489 (LQQGCVSSESTPKT) has biased composition (polar residues). The tract at residues 476-549 (LQQGCVSSES…SQPATPLPLS (74 aa)) is disordered. A compositionally biased stretch (low complexity) spans 490-506 (SASCSPAPESPMSSSES). A phosphoserine mark is found at Ser-499 and Ser-509. Positions 557-644 (QELVAMSPEL…VEKLMDMKRM (88 aa)) form a DNA-binding region, CUT 3. Residues 652–687 (RRHSSVSDSQPCEPPSVGIDYSQGASPQPQHQLKKP) are disordered. Residues 684–743 (LKKPRVVLAPEEKEALKRAYQQKPYPSPKTIEELATQLNLKTSTVINWFHNYRSRIRREL) constitute a DNA-binding region (homeobox). A Phosphoserine modification is found at Ser-710. A Glycyl lysine isopeptide (Lys-Gly) (interchain with G-Cter in SUMO2) cross-link involves residue Lys-724. Positions 752–949 (SQGQAGARHS…DSRDNPLRKK (198 aa)) are disordered. Residues 756 to 773 (AGARHSPSARSSGAAPSS) are compositionally biased toward low complexity. Residue Ser-777 is modified to Phosphoserine. Positions 780 to 813 (GVEAAEGPGAADAEESAPAAAAKSQGGPAEAAVA) are enriched in low complexity. Residues 838–847 (PGRRGGGGPA) show a composition bias toward gly residues. The segment covering 850-860 (APAAPAAAARG) has biased composition (low complexity). Basic residues predominate over residues 861–890 (PSRRPGARAKPRRRRRRRRRHARGGGRRYL). The span at 907-929 (RSSALPSTSAPAAARRPSSLQSL) shows a compositional bias: low complexity. Phosphoserine is present on Ser-925. Over residues 937–946 (GARDSRDNPL) the composition is skewed to basic and acidic residues. Residues Ser-956 and Ser-966 each carry the phosphoserine modification.

This sequence belongs to the CUT homeobox family. Interacts with BANP. Post-translationally, as cells progress into S phase, a fraction of CUX1 molecules is proteolytically processed into N-terminally truncated proteins of 110 kDa by CTSL. Cell cycle-dependent processing of CUX1 serves to generate a CDP/Cux p110 with distinct DNA binding and transcriptional properties. Phosphorylated by PKA. In terms of tissue distribution, a broad pattern of expression observed in tissues of diverse origins, such as cartilage, liver, brain, lung, heart and skeletal muscle. There are 2 distinct protein species: the larger one (230-250 kDa) is found mainly in adult brain, lung and heart, and the smaller one (180-190 kDa) predominates in early embryonic tissues.

It is found in the nucleus. In terms of biological role, transcription factor involved in the control of neuronal differentiation in the brain. Regulates dendrite development and branching, and dendritic spine formation in cortical layers II-III. Also involved in the control of synaptogenesis. In addition, it has probably a broad role in mammalian development as a repressor of developmentally regulated gene expression. May act by preventing binding of positively-activing CCAAT factors to promoters. Component of nf-munr repressor; binds to the matrix attachment regions (MARs) (5' and 3') of the immunoglobulin heavy chain enhancer. Represses T-cell receptor (TCR) beta enhancer function by binding to MARbeta, an ATC-rich DNA sequence located upstream of the TCR beta enhancer. Binds to the TH enhancer; may require the basic helix-loop-helix protein TCF4 as a coactivator. Plays a role in cell cycle progression, in particular at the G1/S transition. As cells progress into S phase, a fraction of CUX1 molecules is proteolytically processed into N-terminally truncated proteins of 110 kDa. While CUX1 only transiently binds to DNA and carries the CCAAT-displacement activity, CDP/Cux p110 makes a stable interaction with DNA and stimulates expression of genes such as POLA1. This chain is Homeobox protein cut-like 1 (CUX1), found in Canis lupus familiaris (Dog).